Consider the following 242-residue polypeptide: Probable transcriptional regulatory protein PXO_01555 (242 aa).

It belongs to the TACO1 family.

The protein localises to the cytoplasm. The chain is Probable transcriptional regulatory protein PXO_01555 from Xanthomonas oryzae pv. oryzae (strain PXO99A).